A 413-amino-acid polypeptide reads, in one-letter code: RING-H2 finger protein ATL54 (413 aa).

The helical transmembrane segment at 83-103 (ISIITITGAVLAILLTGFFLV) threads the bilayer. The segment at 177 to 219 (CPVCLNEFEEDESLRLLPKCNHAFHISCIDTWLSSHTNCPLCR) adopts an RING-type; atypical zinc-finger fold. Disordered stretches follow at residues 238 to 258 (VTPG…EDHG) and 321 to 413 (THVE…VFPL). Residues 387–401 (SSSTLKTNGSSSSVS) are compositionally biased toward low complexity. Positions 402–413 (CFNKNKSSVFPL) are enriched in polar residues.

The protein belongs to the RING-type zinc finger family. ATL subfamily.

Its subcellular location is the membrane. The catalysed reaction is S-ubiquitinyl-[E2 ubiquitin-conjugating enzyme]-L-cysteine + [acceptor protein]-L-lysine = [E2 ubiquitin-conjugating enzyme]-L-cysteine + N(6)-ubiquitinyl-[acceptor protein]-L-lysine.. The protein operates within protein modification; protein ubiquitination. This is RING-H2 finger protein ATL54 (ATL54) from Arabidopsis thaliana (Mouse-ear cress).